The sequence spans 630 residues: PAN2-PAN3 deadenylation complex subunit PAN3 (630 aa).

The C3H1-type zinc finger occupies 7-36 (SAKDTLCKNILIYGYCKFENKGCAFSHHKP). Disordered stretches follow at residues 38 to 72 (VGQPPVSASSSSGYSGNSSPAEAKRKFNLNTPSFQ) and 135 to 171 (GFGSEYPSSPNTSGAGQPPNPYLTGNGHPASMAQSSG). Positions 44–56 (SASSSSGYSGNSS) are enriched in low complexity. The segment covering 140-149 (YPSSPNTSGA) has biased composition (polar residues). Residues 231 to 501 (QTLPRSNLPE…LDRFSQRYLT (271 aa)) form a pseudokinase domain region. Residues R283, 333 to 340 (DYFPNSST), and 388 to 389 (TK) each bind ATP. Positions 502-540 (TRLFSTINNLEDSTDFMESQITTELENARLFRLLTKLNF) form a coiled coil. Residues 541 to 630 (IIDRPEAKDW…DSVFRNLTRD (90 aa)) form a knob domain region.

It belongs to the protein kinase superfamily. PAN3 family. Homodimer. Forms a heterotrimer with a catalytic subunit PAN2 to form the poly(A)-nuclease (PAN) deadenylation complex. Interacts (via PAM-2 motif) with poly(A)-binding protein PAB1 (via PABC domain), conferring substrate specificity of the enzyme complex.

The protein resides in the cytoplasm. In terms of biological role, regulatory subunit of the poly(A)-nuclease (PAN) deadenylation complex, one of two cytoplasmic mRNA deadenylases involved in mRNA turnover. PAN specifically shortens poly(A) tails of RNA and the activity is stimulated by poly(A)-binding protein PAB1. PAN deadenylation is followed by rapid degradation of the shortened mRNA tails by the CCR4-NOT complex. Deadenylated mRNAs are then degraded by two alternative mechanisms, namely exosome-mediated 3'-5' exonucleolytic degradation, or deadenylation-dependent mRNA decaping and subsequent 5'-3' exonucleolytic degradation by XRN1. May also be involved in post-transcriptional maturation of mRNA poly(A) tails. PAN3 acts as a positive regulator for PAN activity, recruiting the catalytic subunit PAN2 to mRNA via its interaction with RNA and with PAB1. The sequence is that of PAN2-PAN3 deadenylation complex subunit PAN3 from Scheffersomyces stipitis (strain ATCC 58785 / CBS 6054 / NBRC 10063 / NRRL Y-11545) (Yeast).